The primary structure comprises 354 residues: tRNase Z TRZ2, chloroplastic (354 aa).

Positions 1-21 (MQLSSSFPISPPKIFPSTKHH) are disordered. A chloroplast-targeting transit peptide spans 1 to 68 (MQLSSSFPIS…EEEEEYRKAR (68 aa)).

Belongs to the RNase Z family. Homodimer. The cofactor is Zn(2+). Requires Ca(2+) as cofactor. Mn(2+) serves as cofactor. Mg(2+) is required as a cofactor. As to expression, highly expressed in green and actively dividing tissues.

Its subcellular location is the plastid. It localises to the chloroplast. The catalysed reaction is Endonucleolytic cleavage of RNA, removing extra 3' nucleotides from tRNA precursor, generating 3' termini of tRNAs. A 3'-hydroxy group is left at the tRNA terminus and a 5'-phosphoryl group is left at the trailer molecule.. Functionally, zinc phosphodiesterase, which displays tRNA 3'-processing endonuclease activity. Involved in tRNA maturation, by removing a 3'-trailer from precursor tRNA. The polypeptide is tRNase Z TRZ2, chloroplastic (Arabidopsis thaliana (Mouse-ear cress)).